Here is a 177-residue protein sequence, read N- to C-terminus: Large ribosomal subunit protein uL6 (177 aa).

It belongs to the universal ribosomal protein uL6 family. In terms of assembly, part of the 50S ribosomal subunit.

Its function is as follows. This protein binds to the 23S rRNA, and is important in its secondary structure. It is located near the subunit interface in the base of the L7/L12 stalk, and near the tRNA binding site of the peptidyltransferase center. The protein is Large ribosomal subunit protein uL6 of Pseudomonas paraeruginosa (strain DSM 24068 / PA7) (Pseudomonas aeruginosa (strain PA7)).